Reading from the N-terminus, the 147-residue chain is Prefoldin subunit alpha (147 aa).

Belongs to the prefoldin alpha subunit family. As to quaternary structure, heterohexamer of two alpha and four beta subunits.

The protein localises to the cytoplasm. In terms of biological role, molecular chaperone capable of stabilizing a range of proteins. Seems to fulfill an ATP-independent, HSP70-like function in archaeal de novo protein folding. This chain is Prefoldin subunit alpha, found in Saccharolobus islandicus (strain L.S.2.15 / Lassen #1) (Sulfolobus islandicus).